The following is a 3414-amino-acid chain: Genome polyprotein (3414 aa).

Positions 1-30 (MVKKAILKGKGGGPPRRVSKETATKTRQPR) are disordered. Over 1–98 (MVKKAILKGK…LQKRGKRRSA (98 aa)) the chain is Cytoplasmic. The propeptide at 97-117 (SATDWMSWLLVITLLGMTIAA) is ER anchor for the capsid protein C, removed in mature form by serine protease NS3. A helical membrane pass occupies residues 99–119 (TDWMSWLLVITLLGMTIAATV). Residues 120-242 (RKERDGSTVI…HLTRVEGWVW (123 aa)) lie on the Extracellular side of the membrane. Asn-144 carries an N-linked (GlcNAc...) asparagine; by host glycan. Residues 243-260 (KNRLLALAMVTVVWLTLE) form a helical membrane-spanning segment. Residue Ser-261 is a topological domain, cytoplasmic. The helical transmembrane segment at 262–280 (VVTRVAVLVVLLCLAPVYA) threads the bilayer. Residues 281 to 727 (SRCTHLENRD…HTVLGGAFNS (447 aa)) lie on the Extracellular side of the membrane. Disulfide bonds link Cys-283–Cys-310, Cys-340–Cys-396, Cys-340–Cys-401, Cys-354–Cys-385, Cys-372–Cys-396, and Cys-372–Cys-401. Positions 378–391 (DRGWGNHCGLFGKG) are fusion peptide. Asn-434 carries an N-linked (GlcNAc...) asparagine; by host glycan. Intrachain disulfides connect Cys-466–Cys-570 and Cys-587–Cys-618. Residues 728-748 (IFGGVGFLPKLLLGVALAWLG) form a helical membrane-spanning segment. The Extracellular segment spans residues 749-755 (LNMRNPT). A helical membrane pass occupies residues 756–776 (MSMSFLLAGVLVLAMTLGVGA). The Extracellular segment spans residues 777–1132 (DVGCAVDTER…RSMVVADNGE (356 aa)). Cystine bridges form between Cys-780–Cys-791, Cys-831–Cys-920, Cys-955–Cys-1000, Cys-1057–Cys-1106, Cys-1068–Cys-1090, and Cys-1089–Cys-1093. Residues Asn-861, Asn-983, and Asn-999 are each glycosylated (N-linked (GlcNAc...) asparagine; by host). The helical transmembrane segment at 1133 to 1153 (LLSEGGVPGIVALFVVLEYII) threads the bilayer. The Cytoplasmic segment spans residues 1154–1158 (RRRPS). Residues 1159–1179 (TGSTVVWGGIVVLALLVTGMV) form a helical membrane-spanning segment. The Lumenal segment spans residues 1180-1187 (RMESLVRY). A helical membrane pass occupies residues 1188–1208 (VVAVGITFHLELGPEIVALML). Residues 1209 to 1293 (LQAVFELRVG…LLMALMTQQD (85 aa)) are Cytoplasmic-facing. The helical transmembrane segment at 1294-1314 (VVTVHHGLVCFLSAASACSIW) threads the bilayer. The Lumenal segment spans residues 1315 to 1327 (RLLRGHREQKGLT). A helical membrane pass occupies residues 1328–1348 (WIVPLARLLGGEGSGIRLLAF). Residues 1349 to 1359 (WELSAHRGRRS) lie on the Cytoplasmic side of the membrane. Residues 1360 to 1377 (FSEPLTVVGVMLTLASGM) traverse the membrane as a helical segment. Over 1378 to 1382 (MRHTS) the chain is Lumenal. Residues 1383–1403 (QEALCALAVASFLLLMLVLGT) form a helical membrane-spanning segment. At 1404-1454 (RKMQLVAEWSGCVEWHPELVNEGGEVSLRVRQDAMGNFHLTELEKEERMMA) the chain is on the cytoplasmic side. Residues 1410–1449 (AEWSGCVEWHPELVNEGGEVSLRVRQDAMGNFHLTELEKE) are interacts with and activates NS3 protease. Residues 1455–1475 (FWLIAGLAASAIHWSGIIGVM) constitute an intramembrane region (helical). Residues 1476 to 2160 (GLWTLTKMLR…RMAERDAPEA (685 aa)) lie on the Cytoplasmic side of the membrane. The Peptidase S7 domain maps to 1490 to 1669 (SDLVFSGQGG…EAEKSRPNLP (180 aa)). Catalysis depends on charge relay system; for serine protease NS3 activity residues His-1543, Asp-1567, and Ser-1627. One can recognise a Helicase ATP-binding domain in the interval 1675–1831 (TGWTSKGQIT…ESNGAITSEE (157 aa)). 1688–1695 (MHPGSGKT) provides a ligand contact to ATP. Residues 1779–1782 (DEAH) carry the DEAH box motif. A Helicase C-terminal domain is found at 1841-2000 (DGFDWITEYE…TLRGPVATFY (160 aa)). An N6-acetyllysine; by host modification is found at Lys-1883. The chain crosses the membrane as a helical span at residues 2161 to 2181 (FLTMVEMMVLGLATLGVIWCF). The Lumenal segment spans residues 2182 to 2189 (VVRTSISR). Positions 2190–2210 (MMLGTLVLLASLLLLWAGGVG) form an intramembrane region, helical. Tyr-2211 is a topological domain (lumenal). Residues 2212 to 2232 (GNMAGVALIFYTLLTVLQPEA) traverse the membrane as a helical segment. The Cytoplasmic portion of the chain corresponds to 2233–2244 (GKQRSSDDNKLA). Residues 2245-2265 (YFLLTLCSLAGLVAANEMGFL) form a helical membrane-spanning segment. Over 2266 to 2299 (EKTKADLSTVLWSEREEPRPWSEWTNVDIQPARS) the chain is Lumenal. Residues 2300–2320 (WGTYVLVVSLFTPYIIHQLQT) constitute an intramembrane region (helical). At 2321 to 2343 (KIQQLVNSAVASGAQAMRDLGGG) the chain is on the lumenal side. Positions 2344–2364 (APFFGVAGHVMTLGVVSLIGA) form an intramembrane region, helical. Residues 2365–2368 (TPTS) are Lumenal-facing. The chain crosses the membrane as a helical span at residues 2369–2389 (LMVGVGLAALHLAIVVSGLEA). Residues 2390 to 2432 (ELTQRAHKVFFSAMVRNPMVDGDVINPFGEGEAKPALYERRMS) lie on the Cytoplasmic side of the membrane. Residues 2433–2453 (LVLAIVLCLMSVVMNRTVASI) form a helical membrane-spanning segment. Residues 2454–2477 (TEASAVGLAAAGQLLRPEADTLWT) are Lumenal-facing. Residues 2478–2498 (MPVACGMSGVVRGSLWGFLPL) traverse the membrane as a helical segment. The Cytoplasmic segment spans residues 2499–3414 (GHRLWLRASG…WELRLESSII (916 aa)). Residues 2512-2776 (GGSEGDTLGD…ELDLGVGTRC (265 aa)) form the mRNA cap 0-1 NS5-type MT domain. An S-adenosyl-L-methionine-binding site is contributed by Ser-2567. Phosphoserine is present on Ser-2567. The active-site For 2'-O-MTase activity is the Lys-2572. Positions 2597, 2598, 2615, 2616, 2642, and 2643 each coordinate S-adenosyl-L-methionine. The For 2'-O-MTase activity role is filled by Asp-2657. Ile-2658 provides a ligand contact to S-adenosyl-L-methionine. Residues Lys-2694 and Glu-2730 each act as for 2'-O-MTase activity in the active site. The interaction with host SCRIB stretch occupies residues 2730-2734 (EMYYS). Tyr-2732 contacts S-adenosyl-L-methionine. Zn(2+)-binding residues include Glu-2950, His-2954, Cys-2959, and Cys-2962. The RdRp catalytic domain occupies 3040 to 3189 (GLFYADDTAG…RPLDDRFGKA (150 aa)). Zn(2+)-binding residues include His-3224, Cys-3240, and Cys-3359.

This sequence in the N-terminal section; belongs to the class I-like SAM-binding methyltransferase superfamily. mRNA cap 0-1 NS5-type methyltransferase family. In terms of assembly, homodimer. Interacts (via N-terminus) with host EXOC1 (via C-terminus); this interaction results in EXOC1 degradation through the proteasome degradation pathway. As to quaternary structure, forms heterodimers with envelope protein E in the endoplasmic reticulum and Golgi. Homodimer; in the endoplasmic reticulum and Golgi. Interacts with protein prM. Interacts with non-structural protein 1. In terms of assembly, homodimer; Homohexamer when secreted. Interacts with envelope protein E. As to quaternary structure, interacts (via N-terminus) with serine protease NS3. Forms a heterodimer with serine protease NS3. May form homooligomers. In terms of assembly, forms a heterodimer with NS2B. Interacts with NS4B. Interacts with unphosphorylated RNA-directed RNA polymerase NS5; this interaction stimulates RNA-directed RNA polymerase NS5 guanylyltransferase activity. As to quaternary structure, interacts with serine protease NS3. Homodimer. Interacts with host STAT2; this interaction inhibits the phosphorylation of the latter, and, when all viral proteins are present (polyprotein), targets STAT2 for degradation. Interacts with serine protease NS3. Interacts with host SCRIB; this interaction targets NS5 to the cell membrane periphery and nucleus, thereby allowing efficient host nuclear STAT1 inhibition. In terms of processing, specific enzymatic cleavages in vivo yield mature proteins. Cleavages in the lumen of endoplasmic reticulum are performed by host signal peptidase, whereas cleavages in the cytoplasmic side are performed by serine protease NS3. Signal cleavage at the 2K-4B site requires a prior NS3 protease-mediated cleavage at the 4A-2K site. Cleaved in post-Golgi vesicles by a host furin, releasing the mature small envelope protein M, and peptide pr. This cleavage is incomplete as up to 30% of viral particles still carry uncleaved prM. Post-translationally, N-glycosylated. In terms of processing, N-glycosylated. The excreted form is glycosylated and this is required for efficient secretion of the protein from infected cells. Acetylated by host KAT5. Acetylation modulates NS3 RNA-binding and unwinding activities and plays an important positive role for viral replication. Post-translationally, phosphorylated on serines residues. This phosphorylation may trigger NS5 nuclear localization.

It is found in the virion. It localises to the host nucleus. The protein localises to the host cytoplasm. The protein resides in the host perinuclear region. Its subcellular location is the secreted. It is found in the virion membrane. It localises to the host endoplasmic reticulum membrane. The catalysed reaction is Selective hydrolysis of -Xaa-Xaa-|-Yaa- bonds in which each of the Xaa can be either Arg or Lys and Yaa can be either Ser or Ala.. The enzyme catalyses RNA(n) + a ribonucleoside 5'-triphosphate = RNA(n+1) + diphosphate. It catalyses the reaction a ribonucleoside 5'-triphosphate + H2O = a ribonucleoside 5'-diphosphate + phosphate + H(+). It carries out the reaction ATP + H2O = ADP + phosphate + H(+). The catalysed reaction is a 5'-end (5'-triphosphoguanosine)-ribonucleoside in mRNA + S-adenosyl-L-methionine = a 5'-end (N(7)-methyl 5'-triphosphoguanosine)-ribonucleoside in mRNA + S-adenosyl-L-homocysteine. The enzyme catalyses a 5'-end (N(7)-methyl 5'-triphosphoguanosine)-ribonucleoside in mRNA + S-adenosyl-L-methionine = a 5'-end (N(7)-methyl 5'-triphosphoguanosine)-(2'-O-methyl-ribonucleoside) in mRNA + S-adenosyl-L-homocysteine + H(+). Functionally, plays a role in virus budding by binding to the cell membrane and gathering the viral RNA into a nucleocapsid that forms the core of a mature virus particle. During virus entry, may induce genome penetration into the host cytoplasm after hemifusion induced by the surface proteins. Can migrate to the cell nucleus where it modulates host functions. Inhibits RNA silencing by interfering with host Dicer. In terms of biological role, prevents premature fusion activity of envelope proteins in trans-Golgi by binding to envelope protein E at pH6.0. After virion release in extracellular space, gets dissociated from E dimers. Its function is as follows. Acts as a chaperone for envelope protein E during intracellular virion assembly by masking and inactivating envelope protein E fusion peptide. prM is the only viral peptide matured by host furin in the trans-Golgi network probably to avoid catastrophic activation of the viral fusion activity in acidic Golgi compartment prior to virion release. prM-E cleavage is inefficient, and many virions are only partially matured. These uncleaved prM would play a role in immune evasion. Functionally, may play a role in virus budding. Exerts cytotoxic effects by activating a mitochondrial apoptotic pathway through M ectodomain. May display a viroporin activity. Binds to host cell surface receptor and mediates fusion between viral and cellular membranes. Envelope protein is synthesized in the endoplasmic reticulum in the form of heterodimer with protein prM. They play a role in virion budding in the ER, and the newly formed immature particle is covered with 60 spikes composed of heterodimer between precursor prM and envelope protein E. The virion is transported to the Golgi apparatus where the low pH causes dissociation of PrM-E heterodimers and formation of E homodimers. prM-E cleavage is inefficient, and many virions are only partially matured. These uncleaved prM would play a role in immune evasion. In terms of biological role, involved in immune evasion, pathogenesis and viral replication. Once cleaved off the polyprotein, is targeted to three destinations: the viral replication cycle, the plasma membrane and the extracellular compartment. Essential for viral replication. Required for formation of the replication complex and recruitment of other non-structural proteins to the ER-derived membrane structures. Excreted as a hexameric lipoparticle that plays a role against host immune response. Antagonizing the complement function. Binds to the host macrophages and dendritic cells. Inhibits signal transduction originating from Toll-like receptor 3 (TLR3). Its function is as follows. Component of the viral RNA replication complex that functions in virion assembly and antagonizes the host immune response. Functionally, required cofactor for the serine protease function of NS3. May have membrane-destabilizing activity and form viroporins. Displays three enzymatic activities: serine protease, NTPase and RNA helicase. NS3 serine protease, in association with NS2B, performs its autocleavage and cleaves the polyprotein at dibasic sites in the cytoplasm: C-prM, NS2A-NS2B, NS2B-NS3, NS3-NS4A, NS4A-2K and NS4B-NS5. NS3 RNA helicase binds RNA and unwinds dsRNA in the 3' to 5' direction. In terms of biological role, regulates the ATPase activity of the NS3 helicase activity. NS4A allows NS3 helicase to conserve energy during unwinding. Its function is as follows. Functions as a signal peptide for NS4B and is required for the interferon antagonism activity of the latter. Functionally, induces the formation of ER-derived membrane vesicles where the viral replication takes place. Inhibits interferon (IFN)-induced host STAT1 phosphorylation and nuclear translocation, thereby preventing the establishment of cellular antiviral state by blocking the IFN-alpha/beta pathway. Inhibits STAT2 translocation in the nucleus after IFN-alpha treatment. Replicates the viral (+) and (-) genome, and performs the capping of genomes in the cytoplasm. NS5 methylates viral RNA cap at guanine N-7 and ribose 2'-O positions. Besides its role in genome replication, also prevents the establishment of cellular antiviral state by blocking the interferon-alpha/beta (IFN-alpha/beta) signaling pathway. Inhibits host TYK2 and STAT2 phosphorylation, thereby preventing activation of JAK-STAT signaling pathway. This is Genome polyprotein from Tick-borne encephalitis virus (strain Hypr) (TBEV).